The sequence spans 319 residues: Lipoyl synthase (319 aa).

Residues 6–29 (DTVSANPVRPRHPEKAARPDALSP) are disordered. Residues 16-29 (RHPEKAARPDALSP) are compositionally biased toward basic and acidic residues. [4Fe-4S] cluster is bound by residues cysteine 61, cysteine 66, cysteine 72, cysteine 87, cysteine 91, cysteine 94, and serine 300. In terms of domain architecture, Radical SAM core spans 73 to 289 (WDKKHATFMI…QTTAYAKGFL (217 aa)).

The protein belongs to the radical SAM superfamily. Lipoyl synthase family. [4Fe-4S] cluster is required as a cofactor.

It localises to the cytoplasm. It carries out the reaction [[Fe-S] cluster scaffold protein carrying a second [4Fe-4S](2+) cluster] + N(6)-octanoyl-L-lysyl-[protein] + 2 oxidized [2Fe-2S]-[ferredoxin] + 2 S-adenosyl-L-methionine + 4 H(+) = [[Fe-S] cluster scaffold protein] + N(6)-[(R)-dihydrolipoyl]-L-lysyl-[protein] + 4 Fe(3+) + 2 hydrogen sulfide + 2 5'-deoxyadenosine + 2 L-methionine + 2 reduced [2Fe-2S]-[ferredoxin]. It participates in protein modification; protein lipoylation via endogenous pathway; protein N(6)-(lipoyl)lysine from octanoyl-[acyl-carrier-protein]: step 2/2. Catalyzes the radical-mediated insertion of two sulfur atoms into the C-6 and C-8 positions of the octanoyl moiety bound to the lipoyl domains of lipoate-dependent enzymes, thereby converting the octanoylated domains into lipoylated derivatives. The protein is Lipoyl synthase of Rhodopseudomonas palustris (strain ATCC BAA-98 / CGA009).